The sequence spans 151 residues: Large ribosomal subunit protein bL9 (151 aa).

The protein belongs to the bacterial ribosomal protein bL9 family.

In terms of biological role, binds to the 23S rRNA. The polypeptide is Large ribosomal subunit protein bL9 (Thermosipho africanus (strain TCF52B)).